Reading from the N-terminus, the 317-residue chain is Methionyl-tRNA formyltransferase (317 aa).

110 to 113 (SLLP) contributes to the (6S)-5,6,7,8-tetrahydrofolate binding site. Residues 292 to 317 (RMKGEDFVRGKNVQPGDVLGEANEEN) are disordered.

It belongs to the Fmt family.

The catalysed reaction is L-methionyl-tRNA(fMet) + (6R)-10-formyltetrahydrofolate = N-formyl-L-methionyl-tRNA(fMet) + (6S)-5,6,7,8-tetrahydrofolate + H(+). In terms of biological role, attaches a formyl group to the free amino group of methionyl-tRNA(fMet). The formyl group appears to play a dual role in the initiator identity of N-formylmethionyl-tRNA by promoting its recognition by IF2 and preventing the misappropriation of this tRNA by the elongation apparatus. This is Methionyl-tRNA formyltransferase from Bacillus velezensis (strain DSM 23117 / BGSC 10A6 / LMG 26770 / FZB42) (Bacillus amyloliquefaciens subsp. plantarum).